The sequence spans 61 residues: Large ribosomal subunit protein eL24 (61 aa).

The Zn(2+) site is built by C7, C10, C33, and C37. Residues 7-37 (CTYCGRSIEPGTGLMYVKNDGSVLWFCSSKC) form a C4-type zinc finger.

This sequence belongs to the eukaryotic ribosomal protein eL24 family. As to quaternary structure, part of the 50S ribosomal subunit. Forms a cluster with proteins L3 and L14. It depends on Zn(2+) as a cofactor.

Functionally, binds to the 23S rRNA. The protein is Large ribosomal subunit protein eL24 of Hyperthermus butylicus (strain DSM 5456 / JCM 9403 / PLM1-5).